The primary structure comprises 264 residues: uncharacterized protein (264 aa).

The N-terminal stretch at 1-26 (MMKKLFHSTLIVLLFFSFFGVQPIHA) is a signal peptide.

This is an uncharacterized protein from Bacillus subtilis (strain 168).